Here is a 33-residue protein sequence, read N- to C-terminus: Ranatuerin-1T (33 aa).

Cys27 and Cys33 form a disulfide bridge.

As to expression, expressed by the skin glands.

The protein resides in the secreted. Its function is as follows. Antibacterial activity against Gram-positive bacterium S.aureus and Gram-negative bacterium E.coli. No activity against C.albicans. In Rana temporaria (European common frog), this protein is Ranatuerin-1T.